The following is a 428-amino-acid chain: Serine--tRNA ligase (428 aa).

235 to 237 (TAE) provides a ligand contact to L-serine. Residue 266–268 (RSE) coordinates ATP. An L-serine-binding site is contributed by E289. Residue 353-356 (EISS) coordinates ATP. S389 lines the L-serine pocket.

It belongs to the class-II aminoacyl-tRNA synthetase family. Type-1 seryl-tRNA synthetase subfamily. Homodimer. The tRNA molecule binds across the dimer.

It is found in the cytoplasm. It catalyses the reaction tRNA(Ser) + L-serine + ATP = L-seryl-tRNA(Ser) + AMP + diphosphate + H(+). It carries out the reaction tRNA(Sec) + L-serine + ATP = L-seryl-tRNA(Sec) + AMP + diphosphate + H(+). Its pathway is aminoacyl-tRNA biosynthesis; selenocysteinyl-tRNA(Sec) biosynthesis; L-seryl-tRNA(Sec) from L-serine and tRNA(Sec): step 1/1. Its function is as follows. Catalyzes the attachment of serine to tRNA(Ser). Is also able to aminoacylate tRNA(Sec) with serine, to form the misacylated tRNA L-seryl-tRNA(Sec), which will be further converted into selenocysteinyl-tRNA(Sec). The polypeptide is Serine--tRNA ligase (Shewanella denitrificans (strain OS217 / ATCC BAA-1090 / DSM 15013)).